The chain runs to 344 residues: Ferrochelatase (344 aa).

2 residues coordinate Fe cation: His196 and Glu277.

The protein belongs to the ferrochelatase family.

The protein localises to the cytoplasm. The enzyme catalyses heme b + 2 H(+) = protoporphyrin IX + Fe(2+). It functions in the pathway porphyrin-containing compound metabolism; protoheme biosynthesis; protoheme from protoporphyrin-IX: step 1/1. Functionally, catalyzes the ferrous insertion into protoporphyrin IX. This chain is Ferrochelatase, found in Synechococcus sp. (strain JA-2-3B'a(2-13)) (Cyanobacteria bacterium Yellowstone B-Prime).